A 99-amino-acid polypeptide reads, in one-letter code: Integration host factor subunit alpha (99 aa).

The tract at residues 49 to 70 is disordered; that stretch reads FGNFDLRDKNQRPGRNPKTGED.

Belongs to the bacterial histone-like protein family. In terms of assembly, heterodimer of an alpha and a beta chain.

This protein is one of the two subunits of integration host factor, a specific DNA-binding protein that functions in genetic recombination as well as in transcriptional and translational control. The chain is Integration host factor subunit alpha from Cronobacter sakazakii (strain ATCC BAA-894) (Enterobacter sakazakii).